The primary structure comprises 959 residues: UPF0182 protein MAE_41360 (959 aa).

9 helical membrane passes run 13 to 33, 50 to 70, 99 to 119, 156 to 176, 184 to 204, 239 to 259, 276 to 296, 319 to 339, and 362 to 382; these read PILL…VVAN, LSWQ…FIFT, LLGL…MLLY, DISS…GLLI, IISI…WANF, LWLT…YLFS, LRHL…HHII, VGQF…IWLG, and FFPY…GTII.

The protein belongs to the UPF0182 family.

It is found in the cell membrane. This chain is UPF0182 protein MAE_41360, found in Microcystis aeruginosa (strain NIES-843 / IAM M-2473).